Reading from the N-terminus, the 697-residue chain is Protein arginine N-methyltransferase 7 (697 aa).

SAM-dependent MTase PRMT-type domains lie at 14–357 and 366–697; these read QNTW…YSLW and EQPA…EETK.

The protein belongs to the class I-like SAM-binding methyltransferase superfamily. Protein arginine N-methyltransferase family. PRMT7 subfamily.

Functionally, essential arginine methyltransferase that can both catalyze the formation of omega-N monomethylarginine (MMA) and symmetrical dimethylarginine (sDMA). Specifically mediates the symmetrical dimethylation of arginine residues in the small nuclear ribonucleoproteins SmD1 and SmD3. This chain is Protein arginine N-methyltransferase 7 (Art7), found in Drosophila virilis (Fruit fly).